We begin with the raw amino-acid sequence, 257 residues long: Acetylglutamate kinase (257 aa).

Residues 43-44 (GG), arginine 65, and asparagine 157 contribute to the substrate site. Residues 180 to 185 (DVSGIL) and 208 to 210 (IIT) each bind ATP.

This sequence belongs to the acetylglutamate kinase family. ArgB subfamily. Homodimer.

It localises to the cytoplasm. It carries out the reaction N-acetyl-L-glutamate + ATP = N-acetyl-L-glutamyl 5-phosphate + ADP. It participates in amino-acid biosynthesis; L-arginine biosynthesis; N(2)-acetyl-L-ornithine from L-glutamate: step 2/4. Catalyzes the ATP-dependent phosphorylation of N-acetyl-L-glutamate. The polypeptide is Acetylglutamate kinase (Salmonella paratyphi B (strain ATCC BAA-1250 / SPB7)).